We begin with the raw amino-acid sequence, 438 residues long: Protein DAY-LENGTH-DEPENDENT DELAYED-GREENING 1, chloroplastic (438 aa).

Residues 1–54 (MSLMSSSMVLCHCLSFSSQNPDPESSSSSLLRYKPCDSISLWGKRRKKLWRFVP) constitute a chloroplast transit peptide. The next 4 helical transmembrane spans lie at 216 to 236 (FLAVLILIPWALDFLAHDYLL), 314 to 334 (AFANIWSDMVFGISLFVLLYA), 359 to 379 (AFLIILITDIFLGYHSESGWE), and 398 to 418 (ITIFICLVPVIMDACVKLWLF).

It belongs to the CemA family.

The protein resides in the plastid. Its subcellular location is the chloroplast envelope. The protein localises to the chloroplast membrane. It catalyses the reaction K(+)(in) + H(+)(out) = K(+)(out) + H(+)(in). The enzyme catalyses Ca(2+)(in) + H(+)(out) = Ca(2+)(out) + H(+)(in). Functionally, promotes K(+)/H(+) antiport activity supporting K(+) efflux to control H(+) homeostasis in chloroplasts. Also able to ensure Ca(2+)/H(+) antiport activity in vitro. Essential for chloroplast pH regulation and optimization of non-photochemical quenching (NPQ), a regulatory mechanism that dissipates excess light energy; acts downstream of PSBS but independently from PGR5 and FLAP1. In Arabidopsis thaliana (Mouse-ear cress), this protein is Protein DAY-LENGTH-DEPENDENT DELAYED-GREENING 1, chloroplastic.